The sequence spans 415 residues: Putative competence-damage inducible protein (415 aa).

Belongs to the CinA family.

The protein is Putative competence-damage inducible protein of Listeria innocua serovar 6a (strain ATCC BAA-680 / CLIP 11262).